The chain runs to 162 residues: Transcription elongation factor GreA (162 aa).

Residues 9–38 adopt a coiled-coil conformation; it reads QGYKALEEELARLKSERPEIIQAIKEAREE.

This sequence belongs to the GreA/GreB family.

Necessary for efficient RNA polymerase transcription elongation past template-encoded arresting sites. The arresting sites in DNA have the property of trapping a certain fraction of elongating RNA polymerases that pass through, resulting in locked ternary complexes. Cleavage of the nascent transcript by cleavage factors such as GreA or GreB allows the resumption of elongation from the new 3'terminus. GreA releases sequences of 2 to 3 nucleotides. This is Transcription elongation factor GreA from Desulfovibrio desulfuricans (strain ATCC 27774 / DSM 6949 / MB).